Here is a 180-residue protein sequence, read N- to C-terminus: NADH-quinone oxidoreductase subunit I (180 aa).

4Fe-4S ferredoxin-type domains lie at 48 to 80 and 90 to 119; these read IVLTRDPDGQERCVACNLCAVACPVGCISLQKA and EFFRINFSRCIFCGMCEEACPTTAIQLTPD. [4Fe-4S] cluster is bound by residues Cys-60, Cys-63, Cys-66, Cys-70, Cys-99, Cys-102, Cys-105, and Cys-109.

This sequence belongs to the complex I 23 kDa subunit family. In terms of assembly, NDH-1 is composed of 13 different subunits. Subunits NuoA, H, J, K, L, M, N constitute the membrane sector of the complex. Requires [4Fe-4S] cluster as cofactor.

The protein resides in the cell inner membrane. The catalysed reaction is a quinone + NADH + 5 H(+)(in) = a quinol + NAD(+) + 4 H(+)(out). Functionally, NDH-1 shuttles electrons from NADH, via FMN and iron-sulfur (Fe-S) centers, to quinones in the respiratory chain. The immediate electron acceptor for the enzyme in this species is believed to be ubiquinone. Couples the redox reaction to proton translocation (for every two electrons transferred, four hydrogen ions are translocated across the cytoplasmic membrane), and thus conserves the redox energy in a proton gradient. This chain is NADH-quinone oxidoreductase subunit I, found in Cronobacter sakazakii (strain ATCC BAA-894) (Enterobacter sakazakii).